Here is a 227-residue protein sequence, read N- to C-terminus: Phosphatidylserine decarboxylase proenzyme (227 aa).

The active-site Schiff-base intermediate with substrate; via pyruvic acid is S184. The residue at position 184 (S184) is a Pyruvic acid (Ser); by autocatalysis.

It belongs to the phosphatidylserine decarboxylase family. PSD-A subfamily. In terms of assembly, heterodimer of a large membrane-associated beta subunit and a small pyruvoyl-containing alpha subunit. Requires pyruvate as cofactor. Is synthesized initially as an inactive proenzyme. Formation of the active enzyme involves a self-maturation process in which the active site pyruvoyl group is generated from an internal serine residue via an autocatalytic post-translational modification. Two non-identical subunits are generated from the proenzyme in this reaction, and the pyruvate is formed at the N-terminus of the alpha chain, which is derived from the carboxyl end of the proenzyme. The post-translation cleavage follows an unusual pathway, termed non-hydrolytic serinolysis, in which the side chain hydroxyl group of the serine supplies its oxygen atom to form the C-terminus of the beta chain, while the remainder of the serine residue undergoes an oxidative deamination to produce ammonia and the pyruvoyl prosthetic group on the alpha chain.

It is found in the cell membrane. It catalyses the reaction a 1,2-diacyl-sn-glycero-3-phospho-L-serine + H(+) = a 1,2-diacyl-sn-glycero-3-phosphoethanolamine + CO2. It functions in the pathway phospholipid metabolism; phosphatidylethanolamine biosynthesis; phosphatidylethanolamine from CDP-diacylglycerol: step 2/2. Its function is as follows. Catalyzes the formation of phosphatidylethanolamine (PtdEtn) from phosphatidylserine (PtdSer). This chain is Phosphatidylserine decarboxylase proenzyme, found in Ehrlichia ruminantium (strain Welgevonden).